Here is a 197-residue protein sequence, read N- to C-terminus: Phosphoheptose isomerase (197 aa).

The region spanning 36–197 (MVNALLNEGK…IDSQLFGSEE (162 aa)) is the SIS domain. Residue 51–53 (NGG) participates in substrate binding. Residues His-60 and Glu-64 each coordinate Zn(2+). Substrate contacts are provided by residues Glu-64, 93–94 (ND), 119–121 (STS), Ser-124, and Gln-174. Gln-174 and His-182 together coordinate Zn(2+).

Belongs to the SIS family. GmhA subfamily. As to quaternary structure, homotetramer. The cofactor is Zn(2+).

It is found in the cytoplasm. It catalyses the reaction 2 D-sedoheptulose 7-phosphate = D-glycero-alpha-D-manno-heptose 7-phosphate + D-glycero-beta-D-manno-heptose 7-phosphate. The protein operates within carbohydrate biosynthesis; D-glycero-D-manno-heptose 7-phosphate biosynthesis; D-glycero-alpha-D-manno-heptose 7-phosphate and D-glycero-beta-D-manno-heptose 7-phosphate from sedoheptulose 7-phosphate: step 1/1. Catalyzes the isomerization of sedoheptulose 7-phosphate in D-glycero-D-manno-heptose 7-phosphate. The polypeptide is Phosphoheptose isomerase (Pseudomonas putida (strain GB-1)).